A 296-amino-acid polypeptide reads, in one-letter code: L-ornithine N(alpha)-acyltransferase (296 aa).

The protein belongs to the acetyltransferase family. OlsB subfamily.

It carries out the reaction a (3R)-hydroxyacyl-[ACP] + L-ornithine = a lyso-ornithine lipid + holo-[ACP] + H(+). Its pathway is lipid metabolism. Functionally, catalyzes the first step in the biosynthesis of ornithine lipids, which are phosphorus-free membrane lipids. Catalyzes the 3-hydroxyacyl-acyl carrier protein-dependent acylation of ornithine to form lyso-ornithine lipid (LOL). The polypeptide is L-ornithine N(alpha)-acyltransferase (Rhizobium meliloti (strain 1021) (Ensifer meliloti)).